A 487-amino-acid polypeptide reads, in one-letter code: MSLPNSSCLLEDKMCEGNKTTMASPQLMPLVVVLSTICLVTVGLNLLVLYAVRSERKLHTVGNLYIVSLSVADLIVGAVVMPMNILYLLMSKWSLGRPLCLFWLSMDYVASTASIFSVFILCIDRYRSVQQPLRYLKYRTKTRASATILGAWFLSFLWVIPILGWNHFMQQTSVRREDKCETDFYDVTWFKVMTAIINFYLPTLLMLWFYAKIYKAVRQHCQHRELINGSLPSFSEIKLRPENPKGDAKKPGKESPWEVLKRKPKDAGGGSVLKSPSQTXKEMKSPVVFSQEDDREVDKLHCFPLDIVPMQTAAEGSSRDYVAVNQSHGQLKTDEQGLNTHGASEISEDQMLGDSQSFSRTDSDTTTETAPGKGKLRSGSNTGLDYIKFTWKRLRSHSRQYVSGLHMNRERKAAKQLGFIMAAFILCWIPYFIFFMVIAFCKNCCNEHLHMFTIWLGYINSTLNPLIYPLCNENFKKTFKRILHIRS.

Over 1 to 29 (MSLPNSSCLLEDKMCEGNKTTMASPQLMP) the chain is Extracellular. 2 N-linked (GlcNAc...) asparagine glycosylation sites follow: Asn5 and Asn18. The helical transmembrane segment at 30–50 (LVVVLSTICLVTVGLNLLVLY) threads the bilayer. At 51-64 (AVRSERKLHTVGNL) the chain is on the cytoplasmic side. A helical membrane pass occupies residues 65 to 89 (YIVSLSVADLIVGAVVMPMNILYLL). Residues 90 to 97 (MSKWSLGR) lie on the Extracellular side of the membrane. A helical membrane pass occupies residues 98-123 (PLCLFWLSMDYVASTASIFSVFILCI). Cys100 and Cys180 are disulfide-bonded. Histamine-binding residues include Asp107 and Thr112. Residues 107-112 (DYVAST) form an important for agonist binding region. At 124–144 (DRYRSVQQPLRYLKYRTKTRA) the chain is on the cytoplasmic side. Phosphothreonine occurs at positions 140 and 142. A helical transmembrane segment spans residues 145 to 164 (SATILGAWFLSFLWVIPILG). Residues 165–188 (WNHFMQQTSVRREDKCETDFYDVT) are Extracellular-facing. A helical membrane pass occupies residues 189–211 (WFKVMTAIINFYLPTLLMLWFYA). Asn198 lines the histamine pocket. Residues 212-416 (KIYKAVRQHC…MNRERKAAKQ (205 aa)) are Cytoplasmic-facing. Ser230 is modified (phosphoserine). Over residues 238-261 (KLRPENPKGDAKKPGKESPWEVLK) the composition is skewed to basic and acidic residues. The interval 238–292 (KLRPENPKGDAKKPGKESPWEVLKRKPKDAGGGSVLKSPSQTXKEMKSPVVFSQE) is disordered. Thr279 carries the phosphothreonine modification. 2 positions are modified to phosphoserine: Ser344 and Ser347. The disordered stretch occupies residues 345 to 379 (EISEDQMLGDSQSFSRTDSDTTTETAPGKGKLRSG). The segment covering 353 to 369 (GDSQSFSRTDSDTTTET) has biased composition (polar residues). Ser380, Ser396, and Ser398 each carry phosphoserine. The chain crosses the membrane as a helical span at residues 417 to 440 (LGFIMAAFILCWIPYFIFFMVIAF). The segment at 424 to 428 (FILCW) is important for agonist binding. Tyr431 provides a ligand contact to histamine. An intrachain disulfide couples Cys441 to Cys444. Residues 441–446 (CKNCCN) lie on the Extracellular side of the membrane. Residues 447–469 (EHLHMFTIWLGYINSTLNPLIYP) form a helical membrane-spanning segment. Over 470–487 (LCNENFKKTFKRILHIRS) the chain is Cytoplasmic.

The protein belongs to the G-protein coupled receptor 1 family. Phosphorylation at sites in the second and third cytoplasmic loops independently contribute to agonist-induced receptor down-regulation.

Its subcellular location is the cell membrane. Functionally, G-protein-coupled receptor for histamine, a biogenic amine that functions as an immune modulator and a neurotransmitter. Through the H1 receptor, histamine mediates the contraction of smooth muscles and increases capillary permeability due to contraction of terminal venules. Also mediates neurotransmission in the central nervous system and thereby regulates circadian rhythms, emotional and locomotor activities as well as cognitive functions. This Pan troglodytes (Chimpanzee) protein is Histamine H1 receptor.